The following is a 57-amino-acid chain: U17-myrmicitoxin-Tb1a (57 aa).

The first 29 residues, 1–29, serve as a signal peptide directing secretion; sequence MEKNRTNIFSVYLMITFLLISIFITMVMS. A propeptide spanning residues 30–33 is cleaved from the precursor; it reads DGEA. A disulfide bridge connects residues Cys-42 and Cys-53. Ala-56 carries the post-translational modification Alanine amide.

In terms of processing, O-glycosylated. Expressed by the venom gland.

The protein resides in the secreted. Serine protease inhibitor which exhibits antifibrinolytic, antielastolytic and antimicrobial activities. Displays antimicrobial activity against bacteria and fungi. Likely functions in the innate immune response to microbial infection and possibly in the venom, as an antifibrinolytic agent. This Tetramorium bicarinatum (Tramp ant) protein is U17-myrmicitoxin-Tb1a.